Here is a 246-residue protein sequence, read N- to C-terminus: ATP synthase subunit a, chloroplastic (246 aa).

4 consecutive transmembrane segments (helical) span residues 35–55 (GQVFIVSWLVIAALIGFALVG), 94–114 (VPYIATVFLFIFGANWAGALI), 133–153 (INVTVALALLTSLSYFYAGLS), and 202–222 (VFALLVPILIPLPVMTLGLFA).

This sequence belongs to the ATPase A chain family. F-type ATPases have 2 components, CF(1) - the catalytic core - and CF(0) - the membrane proton channel. CF(1) has five subunits: alpha(3), beta(3), gamma(1), delta(1), epsilon(1). CF(0) has four main subunits: a, b, b' and c.

The protein localises to the plastid. It localises to the chloroplast thylakoid membrane. In terms of biological role, key component of the proton channel; it plays a direct role in the translocation of protons across the membrane. In Rhodomonas salina (Cryptomonas salina), this protein is ATP synthase subunit a, chloroplastic.